Here is a 198-residue protein sequence, read N- to C-terminus: 3-isopropylmalate dehydratase small subunit (198 aa).

This sequence belongs to the LeuD family. LeuD type 1 subfamily. Heterodimer of LeuC and LeuD.

The enzyme catalyses (2R,3S)-3-isopropylmalate = (2S)-2-isopropylmalate. The protein operates within amino-acid biosynthesis; L-leucine biosynthesis; L-leucine from 3-methyl-2-oxobutanoate: step 2/4. In terms of biological role, catalyzes the isomerization between 2-isopropylmalate and 3-isopropylmalate, via the formation of 2-isopropylmaleate. This chain is 3-isopropylmalate dehydratase small subunit, found in Mycobacterium marinum (strain ATCC BAA-535 / M).